The sequence spans 292 residues: MKQIYLKSRAKINLSLDVRRKREDGYHEVEMIMQQIDLYDNILIRERMDSEIVLSTNCIFIPTTSSNIAYKAAHKLKQRLDITRGIDIFIDKQIPVSAGLAGGSSNAAAVLMGLNHLWSLGLSTKELMEIGVTIGADVPFCLLGGTALAEGIGEVLTPINSDIKNTWIVLVKPAISVSTGDVYGSLDLSKIVDRPPTAQLLEAIKEGNIYDVSSKMCNVLETVTVNKYPIITEIKKKMMEYNALGAMMSGSGPTVFGIFKSYERAKSAYEHLSLFYKQSYMVQTYNGGTEIG.

The active site involves Lys11. 95–105 (PVSAGLAGGSS) contacts ATP. Asp137 is an active-site residue.

Belongs to the GHMP kinase family. IspE subfamily.

The enzyme catalyses 4-CDP-2-C-methyl-D-erythritol + ATP = 4-CDP-2-C-methyl-D-erythritol 2-phosphate + ADP + H(+). Its pathway is isoprenoid biosynthesis; isopentenyl diphosphate biosynthesis via DXP pathway; isopentenyl diphosphate from 1-deoxy-D-xylulose 5-phosphate: step 3/6. Catalyzes the phosphorylation of the position 2 hydroxy group of 4-diphosphocytidyl-2C-methyl-D-erythritol. This chain is 4-diphosphocytidyl-2-C-methyl-D-erythritol kinase, found in Alkaliphilus oremlandii (strain OhILAs) (Clostridium oremlandii (strain OhILAs)).